We begin with the raw amino-acid sequence, 409 residues long: uncharacterized protein (409 aa).

Position 46 (H46) interacts with Zn(2+). E49 serves as the catalytic Proton acceptor. Positions 50 and 126 each coordinate Zn(2+).

This sequence belongs to the peptidase M16 family. The cofactor is Zn(2+).

This is an uncharacterized protein from Bacillus subtilis (strain 168).